A 556-amino-acid polypeptide reads, in one-letter code: Oxygen-dependent choline dehydrogenase (556 aa).

4–33 contacts FAD; sequence DYIIIGAGSAGNVLATRLTEDPNTTVLLLE. The active-site Proton acceptor is H473.

Belongs to the GMC oxidoreductase family. FAD serves as cofactor.

It catalyses the reaction choline + A = betaine aldehyde + AH2. It carries out the reaction betaine aldehyde + NAD(+) + H2O = glycine betaine + NADH + 2 H(+). Its pathway is amine and polyamine biosynthesis; betaine biosynthesis via choline pathway; betaine aldehyde from choline (cytochrome c reductase route): step 1/1. In terms of biological role, involved in the biosynthesis of the osmoprotectant glycine betaine. Catalyzes the oxidation of choline to betaine aldehyde and betaine aldehyde to glycine betaine at the same rate. This Escherichia coli O6:K15:H31 (strain 536 / UPEC) protein is Oxygen-dependent choline dehydrogenase.